The primary structure comprises 30 residues: Brevinin-2Ej (30 aa).

An intrachain disulfide couples C24 to C30.

As to expression, expressed by the skin glands.

Its subcellular location is the secreted. Shows antibacterial activity against representative Gram-negative and Gram-positive bacterial species, and hemolytic activity. This is Brevinin-2Ej from Pelophylax ridibundus (Marsh frog).